The chain runs to 293 residues: Acetylglutamate kinase (293 aa).

Substrate-binding positions include 60–61 (GG), R82, and N188.

It belongs to the acetylglutamate kinase family. ArgB subfamily.

The protein resides in the cytoplasm. It catalyses the reaction N-acetyl-L-glutamate + ATP = N-acetyl-L-glutamyl 5-phosphate + ADP. The protein operates within amino-acid biosynthesis; L-arginine biosynthesis; N(2)-acetyl-L-ornithine from L-glutamate: step 2/4. Functionally, catalyzes the ATP-dependent phosphorylation of N-acetyl-L-glutamate. This chain is Acetylglutamate kinase, found in Methanothermobacter thermautotrophicus (strain ATCC 29096 / DSM 1053 / JCM 10044 / NBRC 100330 / Delta H) (Methanobacterium thermoautotrophicum).